A 337-amino-acid polypeptide reads, in one-letter code: Tryptophan--tRNA ligase (337 aa).

Residues glutamine 12–serine 14 and glycine 21–asparagine 22 contribute to the ATP site. The 'HIGH' region motif lies at proline 13–asparagine 22. Aspartate 138 lines the L-tryptophan pocket. ATP-binding positions include glycine 150–aspartate 152, isoleucine 189, and lysine 198–serine 202. Residues lysine 198–serine 202 carry the 'KMSKS' region motif.

It belongs to the class-I aminoacyl-tRNA synthetase family. Homodimer.

The protein localises to the cytoplasm. The enzyme catalyses tRNA(Trp) + L-tryptophan + ATP = L-tryptophyl-tRNA(Trp) + AMP + diphosphate + H(+). Catalyzes the attachment of tryptophan to tRNA(Trp). This chain is Tryptophan--tRNA ligase, found in Leifsonia xyli subsp. xyli (strain CTCB07).